Consider the following 469-residue polypeptide: Citrate synthase, mitochondrial (469 aa).

The N-terminal 31 residues, 1-31 (MTLLTASSRAAARLLGAKNSSCIIFAARHAS), are a transit peptide targeting the mitochondrion. Residues histidine 304 and histidine 350 contribute to the active site. Position 359 (arginine 359) interacts with oxaloacetate. Aspartate 405 is an active-site residue. Residues arginine 431 and arginine 451 each contribute to the oxaloacetate site.

Belongs to the citrate synthase family. Homodimer.

It localises to the mitochondrion matrix. It carries out the reaction oxaloacetate + acetyl-CoA + H2O = citrate + CoA + H(+). It participates in carbohydrate metabolism; tricarboxylic acid cycle; isocitrate from oxaloacetate: step 1/2. Key enzyme of the Krebs tricarboxylic acid cycle which catalyzes the synthesis of citrate from acetyl coenzyme A and oxaloacetate. The polypeptide is Citrate synthase, mitochondrial (CS) (Amblyrhynchus cristatus (Galapagos marine iguana)).